A 1291-amino-acid polypeptide reads, in one-letter code: Tat-binding homolog 7 (1291 aa).

The segment at 1–345 is disordered; sequence MPRSDGFSPR…HNRGERERGR (345 aa). Basic and acidic residues predominate over residues 64–82; the sequence is RYYEEEYHEAISSEEDERR. Positions 88 to 99 are enriched in polar residues; it reads SSNSMTYRQQVM. The span at 226–257 shows a compositional bias: acidic residues; the sequence is EEEEEGAEEDEQSGEKDPEEEEDDSSNAESSE. Positions 298-311 are enriched in basic residues; it reads NRHHRNRNGSRRRR. Residue 432 to 439 participates in ATP binding; sequence GPPGTGKT. One can recognise a Bromo domain in the interval 914–1022; sequence ALQRQMRLFF…DAIDDLIECE (109 aa). The disordered stretch occupies residues 1110–1194; that stretch reads KSEEGTSTST…MKDASKDSTP (85 aa). The span at 1128 to 1142 shows a compositional bias: basic residues; the sequence is NKKKLLKKKKGQKKS. Positions 1148 to 1164 are enriched in acidic residues; sequence EEHDEDSTVEDAGEDTI. Residues 1168–1190 show a composition bias toward basic and acidic residues; it reads LEIKKNQETPNSEHDIEMKDASK.

The protein belongs to the AAA ATPase family.

In terms of biological role, thought to form a complex that enhances transcription from repetitive DNA sequences by modulating chromatin structure. The protein is Tat-binding homolog 7 (lex-1) of Caenorhabditis elegans.